A 209-amino-acid chain; its full sequence is Ribosomal RNA large subunit methyltransferase E (209 aa).

S-adenosyl-L-methionine is bound by residues Gly63, Trp65, Asp83, Asp99, and Asp124. The active-site Proton acceptor is Lys164.

Belongs to the class I-like SAM-binding methyltransferase superfamily. RNA methyltransferase RlmE family.

The protein localises to the cytoplasm. It catalyses the reaction uridine(2552) in 23S rRNA + S-adenosyl-L-methionine = 2'-O-methyluridine(2552) in 23S rRNA + S-adenosyl-L-homocysteine + H(+). In terms of biological role, specifically methylates the uridine in position 2552 of 23S rRNA at the 2'-O position of the ribose in the fully assembled 50S ribosomal subunit. The chain is Ribosomal RNA large subunit methyltransferase E from Yersinia enterocolitica serotype O:8 / biotype 1B (strain NCTC 13174 / 8081).